A 247-amino-acid polypeptide reads, in one-letter code: Probable proteasome subunit alpha type-5 (247 aa).

At T55 the chain carries Phosphothreonine.

This sequence belongs to the peptidase T1A family. The 26S proteasome consists of a 20S proteasome core and two 19S regulatory subunits. The 20S proteasome core is composed of 28 subunits that are arranged in four stacked rings, resulting in a barrel-shaped structure. The two end rings are each formed by seven alpha subunits, and the two central rings are each formed by seven beta subunits. The catalytic chamber with the active sites is on the inside of the barrel.

Its subcellular location is the cytoplasm. It localises to the nucleus. Its function is as follows. The proteasome is a multicatalytic proteinase complex which is characterized by its ability to cleave peptides with Arg, Phe, Tyr, Leu, and Glu adjacent to the leaving group at neutral or slightly basic pH. The proteasome has an ATP-dependent proteolytic activity. This chain is Probable proteasome subunit alpha type-5 (pup2), found in Schizosaccharomyces pombe (strain 972 / ATCC 24843) (Fission yeast).